A 268-amino-acid polypeptide reads, in one-letter code: Small ribosomal subunit protein uS2 (268 aa).

Residues 228–268 are disordered; the sequence is QLDSEQDYEDFDESISDEYDDYEDEEEYEEQDLEVDASEDE. The segment covering 231–268 has biased composition (acidic residues); the sequence is SEQDYEDFDESISDEYDDYEDEEEYEEQDLEVDASEDE.

Belongs to the universal ribosomal protein uS2 family.

The polypeptide is Small ribosomal subunit protein uS2 (Rippkaea orientalis (strain PCC 8801 / RF-1) (Cyanothece sp. (strain PCC 8801))).